A 625-amino-acid polypeptide reads, in one-letter code: Alpha-protein kinase vwkA (625 aa).

The segment covering 1–15 has biased composition (basic and acidic residues); sequence MESKYVLSTEKESKT. The interval 1–64 is disordered; sequence MESKYVLSTE…GLSSGGSKTH (64 aa). 2 stretches are compositionally biased toward polar residues: residues 25-39 and 46-63; these read DMDSISNSLSKTSLG and SLKTDASRSGLSSGGSKT. Residues 87–114 are a coiled coil; it reads TKDSITLAKEKEKKIEKRNEEIKLTFKA. The region spanning 122–322 is the VWFA domain; sequence DLLFIVDCTG…KMNERIFISI (201 aa). One can recognise an Alpha-type protein kinase domain in the interval 386 to 600; that stretch reads TCLSSSYEMK…HCKKLGLTIP (215 aa). 570 to 576 contacts ATP; it reads GSCNLGK. A disordered region spans residues 602–625; that stretch reads FTSSSSTSSSSRSTSSSSSISYSY.

The protein belongs to the protein kinase superfamily. Alpha-type protein kinase family. ALPK subfamily. As to quaternary structure, interacts with calmodulin; in the presence of calcium. Post-translationally, autophosphorylated, in vitro.

It is found in the cytoplasm. It localises to the cytosol. The protein localises to the perinuclear region. The protein resides in the contractile vacuole membrane. It catalyses the reaction L-seryl-[protein] + ATP = O-phospho-L-seryl-[protein] + ADP + H(+). The catalysed reaction is L-threonyl-[protein] + ATP = O-phospho-L-threonyl-[protein] + ADP + H(+). Autophosphorylation activity enhanced by calcium/calmodulin. In terms of biological role, displays a modest preference for threonine over serine residues. Does not phosphorylate myosin II, however can phosphorylate MBP, in vitro. May be involved in the regulation of myosin II function during cytokinesis. Overexpression leads to impaired cell proliferation in suspension culture and fails to develop beyond the mound stage. Both overexpression and absence of the gene can result in defects in cytokinesis and alterations in myosin II abundance and assembly. This Dictyostelium discoideum (Social amoeba) protein is Alpha-protein kinase vwkA (vwkA).